The following is a 506-amino-acid chain: Anaerobic nitric oxide reductase transcription regulator NorR (506 aa).

Residue D57 is modified to 4-aspartylphosphate. In terms of domain architecture, Sigma-54 factor interaction spans 187-416; sequence MIGLSPAMTQ…LEHAIHRAVV (230 aa). ATP-binding positions include 215–222 and 278–287; these read GETGTGKE and ADNGTLFLDE. A DNA-binding region (H-T-H motif) is located at residues 481 to 500; sequence WAASARALETDVANLHRLAK.

It functions in the pathway nitrogen metabolism; nitric oxide reduction. Required for the expression of anaerobic nitric oxide (NO) reductase, acts as a transcriptional activator for at least the norVW operon. Activation also requires sigma-54. The protein is Anaerobic nitric oxide reductase transcription regulator NorR of Salmonella dublin (strain CT_02021853).